The chain runs to 205 residues: MAHGPGALMLKCVVVGDGAVGKTCLLMSYANDAFPEEYVPTVFDHYAVSVTVGGKQYLLGLYDTAGQEDYDRLRPLSYPMTDVFLICFSVVNPASFQNVKEEWVPELKEYAPNVPFLLIGTQIDLRDDPKTLARLNDMKEKPICVEQGQKLAKEIGACCYVECSALTQKGLKTVFDEAIIAILTPKKHTVKKRIGSRCINCCLIT.

GTP is bound at residue 16-23 (GDGAVGKT). Residues 38–46 (YVPTVFDHY) carry the Effector region motif. GTP-binding positions include 63–67 (DTAGQ) and 121–124 (TQID). Position 202 is a cysteine methyl ester (Cys202). Cys202 carries S-farnesyl cysteine lipidation. Residues 203–205 (LIT) constitute a propeptide, removed in mature form.

This sequence belongs to the small GTPase superfamily. Rho family. As to quaternary structure, interacts with CDC42EP4 in a GTP-dependent manner. Interacts with ARHGAP33/TCGAP. Interacts with CDC42EP1, CDC42EP2, CDC42EP3, PARD6A, PARD6G (and probably PARD6B) in a GTP-dependent manner. Part of a quaternary complex containing PARD3, some PARD6 protein (PARD6A, PARD6B or PARD6G) and some atypical PKC protein (PRKCI or PRKCZ). Interacts with EXO70 in a GTP-dependent manner. Interacts with GOPC. May be post-translationally modified by both palmitoylation and polyisoprenylation.

The protein resides in the cytoplasm. Its subcellular location is the cell membrane. Its activity is regulated as follows. Regulated by guanine nucleotide exchange factors (GEFs) which promote the exchange of bound GDP for free GTP, GTPase activating proteins (GAPs) which increase the GTP hydrolysis activity, and GDP dissociation inhibitors which inhibit the dissociation of the nucleotide from the GTPase. Its function is as follows. Plasma membrane-associated small GTPase which cycles between an active GTP-bound and an inactive GDP-bound state. In active state binds to a variety of effector proteins to regulate cellular responses. Involved in epithelial cell polarization processes. May play a role in CFTR trafficking to the plasma membrane. Causes the formation of thin, actin-rich surface projections called filopodia. The polypeptide is Rho-related GTP-binding protein RhoQ (RHOQ) (Homo sapiens (Human)).